Consider the following 39-residue polypeptide: Cytochrome b559 subunit beta (39 aa).

A helical transmembrane segment spans residues 14–30; sequence WLAVHGLAIPTVFFLGS. Heme is bound at residue His-18.

It belongs to the PsbE/PsbF family. As to quaternary structure, heterodimer of an alpha subunit and a beta subunit. PSII is composed of 1 copy each of membrane proteins PsbA, PsbB, PsbC, PsbD, PsbE, PsbF, PsbH, PsbI, PsbJ, PsbK, PsbL, PsbM, PsbT, PsbX, PsbY, PsbZ, Psb30/Ycf12, at least 3 peripheral proteins of the oxygen-evolving complex and a large number of cofactors. It forms dimeric complexes. It depends on heme b as a cofactor.

It localises to the plastid membrane. This b-type cytochrome is tightly associated with the reaction center of photosystem II (PSII). PSII is a light-driven water:plastoquinone oxidoreductase that uses light energy to abstract electrons from H(2)O, generating O(2) and a proton gradient subsequently used for ATP formation. It consists of a core antenna complex that captures photons, and an electron transfer chain that converts photonic excitation into a charge separation. This is Cytochrome b559 subunit beta from Cuscuta gronovii (Common dodder).